Here is a 1091-residue protein sequence, read N- to C-terminus: Neural cell adhesion molecule 1 (1091 aa).

A signal peptide spans M1–S19. Ig-like C2-type domains are found at residues L20–K113, Q116–Q205, P212–H301, P308–Q403, and P406–V495. Residues L20–T711 are Extracellular-facing. Cystine bridges form between C41–C96 and C139–C189. Residues K152–R156 and K161–R165 contribute to the heparin site. N222 carries an N-linked (GlcNAc...) asparagine glycan. C235 and C287 form a disulfide bridge. N-linked (GlcNAc...) asparagine glycans are attached at residues N315, N347, N423, N449, and N478. C329 and C385 are joined by a disulfide. An intrachain disulfide couples C426 to C479. Fibronectin type-III domains are found at residues T499–V598 and E600–P696. A helical membrane pass occupies residues A712–V729. At D730–K1091 the chain is on the cytoplasmic side. Disordered stretches follow at residues G756 to E809, A840 to S916, E937 to K1023, and T1041 to K1091. The span at K758–P799 shows a compositional bias: basic and acidic residues. Over residues S845–S856 the composition is skewed to low complexity. Composition is skewed to polar residues over residues D904–S916 and Q980–N1012. Basic and acidic residues-rich tracts occupy residues E1013–K1023 and K1068–K1091.

Post-translationally, polysialylated by ST8SIA2 and ST8SIA4. Polysialylation modulates cell interactions by confering both attractive and repulsive properties that are highly regulated by ST8SIA2 and ST8SIA4. Polysialylation is formed on a-2,3-linked sialic acid of core glycans.

It is found in the cell membrane. Functionally, this protein is a cell adhesion molecule involved in neuron-neuron adhesion, neurite fasciculation, outgrowth of neurites, etc. This chain is Neural cell adhesion molecule 1, found in Gallus gallus (Chicken).